The sequence spans 234 residues: Large ribosomal subunit protein uL3 (234 aa).

Residues 137 to 156 are disordered; that stretch reads AGHGVERKHRSPGSVGGCAT.

This sequence belongs to the universal ribosomal protein uL3 family. In terms of assembly, part of the 50S ribosomal subunit. Forms a cluster with proteins L14 and L19.

Its function is as follows. One of the primary rRNA binding proteins, it binds directly near the 3'-end of the 23S rRNA, where it nucleates assembly of the 50S subunit. In Frankia alni (strain DSM 45986 / CECT 9034 / ACN14a), this protein is Large ribosomal subunit protein uL3.